Consider the following 356-residue polypeptide: D-alanine--D-alanine ligase (356 aa).

The ATP-grasp domain occupies 134–339 (KQLFEHRGLP…YPELITKLIE (206 aa)). An ATP-binding site is contributed by 167–222 (NDKLNYPVFVKPANLGSSIGISKCSNEVELKEGIKEAFQFDRKLVIEQGVNAREIE). Mg(2+)-binding residues include D293, E306, and N308.

Belongs to the D-alanine--D-alanine ligase family. It depends on Mg(2+) as a cofactor. Requires Mn(2+) as cofactor.

The protein resides in the cytoplasm. It carries out the reaction 2 D-alanine + ATP = D-alanyl-D-alanine + ADP + phosphate + H(+). It participates in cell wall biogenesis; peptidoglycan biosynthesis. In terms of biological role, cell wall formation. The protein is D-alanine--D-alanine ligase of Staphylococcus aureus (strain MRSA252).